The sequence spans 107 residues: Nucleoid-associated protein Msil_0275 (107 aa).

The protein belongs to the YbaB/EbfC family. As to quaternary structure, homodimer.

Its subcellular location is the cytoplasm. The protein resides in the nucleoid. Its function is as follows. Binds to DNA and alters its conformation. May be involved in regulation of gene expression, nucleoid organization and DNA protection. The sequence is that of Nucleoid-associated protein Msil_0275 from Methylocella silvestris (strain DSM 15510 / CIP 108128 / LMG 27833 / NCIMB 13906 / BL2).